The sequence spans 103 residues: Large ribosomal subunit protein bL21 (103 aa).

Belongs to the bacterial ribosomal protein bL21 family. Part of the 50S ribosomal subunit. Contacts protein L20.

Functionally, this protein binds to 23S rRNA in the presence of protein L20. The protein is Large ribosomal subunit protein bL21 of Escherichia coli O127:H6 (strain E2348/69 / EPEC).